The chain runs to 226 residues: Membrane protein (226 aa).

The Virion surface segment spans residues 1-11 (MSNGSIPVDEV). The chain crosses the membrane as a helical span at residues 12–32 (IEHLRNWNFTWNIILTILLVV). Residues 33–41 (LQYGHYKYS) are Intravirion-facing. Residues 42 to 62 (VFLYGVKMAILWILWPLVLAL) form a helical membrane-spanning segment. Topologically, residues 63–75 (SLFDAWASFQVNW) are virion surface. The helical transmembrane segment at 76–96 (VFFAFSILMACITLMLWIMYF) threads the bilayer. Topologically, residues 97-226 (VNSIRLWRRT…TDSEKVPHLV (130 aa)) are intravirion. Positions 200–216 (RSKHGDYSAVSNPSAVL) are interaction with N protein.

Belongs to the alphacoronaviruses M protein family. Homomultimer. Interacts with envelope E protein in the budding compartment of the host cell, which is located between endoplasmic reticulum and the Golgi complex. Forms a complex with HE and S proteins. Interacts with nucleocapsid N protein. This interaction probably participates in RNA packaging into the virus.

The protein localises to the virion membrane. Its subcellular location is the host Golgi apparatus membrane. In terms of biological role, component of the viral envelope that plays a central role in virus morphogenesis and assembly via its interactions with other viral proteins. This is Membrane protein from Sus scrofa (Pig).